The sequence spans 86 residues: UPF0297 protein LSL_1110 (86 aa).

This sequence belongs to the UPF0297 family.

The chain is UPF0297 protein LSL_1110 from Ligilactobacillus salivarius (strain UCC118) (Lactobacillus salivarius).